Consider the following 367-residue polypeptide: Fructose-1,6-bisphosphatase class 1 3 (367 aa).

It belongs to the FBPase class 1 family. As to quaternary structure, homotetramer.

It localises to the cytoplasm. The catalysed reaction is beta-D-fructose 1,6-bisphosphate + H2O = beta-D-fructose 6-phosphate + phosphate. It participates in carbohydrate biosynthesis; gluconeogenesis. The sequence is that of Fructose-1,6-bisphosphatase class 1 3 from Paraburkholderia phymatum (strain DSM 17167 / CIP 108236 / LMG 21445 / STM815) (Burkholderia phymatum).